We begin with the raw amino-acid sequence, 314 residues long: Olfactory receptor 5P62 (314 aa).

At Met1–Val28 the chain is on the extracellular side. N-linked (GlcNAc...) asparagine glycosylation is present at Asn6. A helical membrane pass occupies residues Ile29 to Ile49. Residues Leu50–Lys57 are Cytoplasmic-facing. The helical transmembrane segment at Leu58–Ser78 threads the bilayer. The Extracellular segment spans residues Ser79 to Ile102. The cysteines at positions 100 and 192 are disulfide-linked. Residues Gln103 to Tyr123 form a helical membrane-spanning segment. The Cytoplasmic segment spans residues Asp124–Ser136. A helical transmembrane segment spans residues Thr137–Leu157. Over Asn158–Glu199 the chain is Extracellular. A helical membrane pass occupies residues Ile200 to Pro220. The Cytoplasmic segment spans residues Tyr221–Ala240. The helical transmembrane segment at Phe241 to Ile261 threads the bilayer. Residues Tyr262–Asn274 lie on the Extracellular side of the membrane. A helical transmembrane segment spans residues Lys275 to Leu295. Over Arg296–Leu314 the chain is Cytoplasmic.

The protein belongs to the G-protein coupled receptor 1 family.

It is found in the cell membrane. Its function is as follows. Potential odorant receptor. The sequence is that of Olfactory receptor 5P62 from Mus musculus (Mouse).